A 94-amino-acid polypeptide reads, in one-letter code: MKISEEEVRHVAKLARLNLTDEEVAMFSRQVGDILDYVDQLNTVDTEGVEGASHAISVNNAFREDKVKDSMDPDLALSNAPEREDTDIIVPKVI.

This sequence belongs to the GatC family. As to quaternary structure, heterotrimer of A, B and C subunits.

It carries out the reaction L-glutamyl-tRNA(Gln) + L-glutamine + ATP + H2O = L-glutaminyl-tRNA(Gln) + L-glutamate + ADP + phosphate + H(+). The enzyme catalyses L-aspartyl-tRNA(Asn) + L-glutamine + ATP + H2O = L-asparaginyl-tRNA(Asn) + L-glutamate + ADP + phosphate + 2 H(+). Functionally, allows the formation of correctly charged Asn-tRNA(Asn) or Gln-tRNA(Gln) through the transamidation of misacylated Asp-tRNA(Asn) or Glu-tRNA(Gln) in organisms which lack either or both of asparaginyl-tRNA or glutaminyl-tRNA synthetases. The reaction takes place in the presence of glutamine and ATP through an activated phospho-Asp-tRNA(Asn) or phospho-Glu-tRNA(Gln). This chain is Aspartyl/glutamyl-tRNA(Asn/Gln) amidotransferase subunit C, found in Desulfatibacillum aliphaticivorans.